The sequence spans 92 residues: MARSIKKGPFIEKSLYQKVLASSGKEKRVVIKTYSRTSTIIPEMVSLTISVYNGKSFIPVYITEDLVGHKLGEFSPTRIFRGHAKSDKKGRK.

The protein belongs to the universal ribosomal protein uS19 family.

In terms of biological role, protein S19 forms a complex with S13 that binds strongly to the 16S ribosomal RNA. This chain is Small ribosomal subunit protein uS19, found in Borrelia duttonii (strain Ly).